Here is a 206-residue protein sequence, read N- to C-terminus: Protein GrpE (206 aa).

Belongs to the GrpE family. As to quaternary structure, homodimer.

The protein resides in the cytoplasm. Participates actively in the response to hyperosmotic and heat shock by preventing the aggregation of stress-denatured proteins, in association with DnaK and GrpE. It is the nucleotide exchange factor for DnaK and may function as a thermosensor. Unfolded proteins bind initially to DnaJ; upon interaction with the DnaJ-bound protein, DnaK hydrolyzes its bound ATP, resulting in the formation of a stable complex. GrpE releases ADP from DnaK; ATP binding to DnaK triggers the release of the substrate protein, thus completing the reaction cycle. Several rounds of ATP-dependent interactions between DnaJ, DnaK and GrpE are required for fully efficient folding. The protein is Protein GrpE of Shewanella sp. (strain W3-18-1).